Consider the following 851-residue polypeptide: Leucine--tRNA ligase (851 aa).

The 'HIGH' region signature appears at 51–61; sequence PYPSGDLHMGH. A 'KMSKS' region motif is present at residues 615 to 619; the sequence is KMSKS. Lys618 contributes to the ATP binding site.

This sequence belongs to the class-I aminoacyl-tRNA synthetase family.

The protein resides in the cytoplasm. The catalysed reaction is tRNA(Leu) + L-leucine + ATP = L-leucyl-tRNA(Leu) + AMP + diphosphate. The protein is Leucine--tRNA ligase of Clavibacter michiganensis subsp. michiganensis (strain NCPPB 382).